The chain runs to 296 residues: GTPase Era (296 aa).

Positions 7–174 (RAGFVAIVGR…LDEIAAGLPQ (168 aa)) constitute an Era-type G domain. The G1 stretch occupies residues 15–22 (GRPNVGKS). 15–22 (GRPNVGKS) lines the GTP pocket. The interval 41 to 45 (QTTRH) is G2. Residues 62–65 (DTPG) form a G3 region. Residues 62–66 (DTPGF) and 123–126 (SKID) each bind GTP. The tract at residues 123 to 126 (SKID) is G4. The tract at residues 153–155 (VSA) is G5. Positions 205-281 (VGDELPYGCT…HLEIYIKVRK (77 aa)) constitute a KH type-2 domain.

Belongs to the TRAFAC class TrmE-Era-EngA-EngB-Septin-like GTPase superfamily. Era GTPase family. In terms of assembly, monomer.

The protein resides in the cytoplasm. Its subcellular location is the cell inner membrane. Functionally, an essential GTPase that binds both GDP and GTP, with rapid nucleotide exchange. Plays a role in 16S rRNA processing and 30S ribosomal subunit biogenesis and possibly also in cell cycle regulation and energy metabolism. In Bordetella parapertussis (strain 12822 / ATCC BAA-587 / NCTC 13253), this protein is GTPase Era.